The sequence spans 148 residues: Protoporphyrinogen IX oxidase (148 aa).

4 helical membrane-spanning segments follow: residues 7–27 (YFLW…AALF), 59–79 (FIAS…LLIA), 86–106 (GGWL…HFYC), and 128–148 (FNEI…VKPF). His15 lines the heme pocket. Lys92 is a binding site for heme.

It belongs to the HemJ family. Homodimer. The cofactor is heme b.

The protein resides in the cell membrane. The enzyme catalyses protoporphyrinogen IX + 3 A = protoporphyrin IX + 3 AH2. It functions in the pathway porphyrin-containing compound metabolism; protoporphyrin-IX biosynthesis; protoporphyrin-IX from protoporphyrinogen-IX: step 1/1. In terms of biological role, catalyzes the oxidation of protoporphyrinogen IX to protoporphyrin IX. Is involved in the biosynthesis of tetrapyrrole molecules like heme. Does not use oxygen or artificial electron acceptors such as menadione or benzoquinone. The chain is Protoporphyrinogen IX oxidase from Helicobacter pylori (strain J99 / ATCC 700824) (Campylobacter pylori J99).